Reading from the N-terminus, the 485-residue chain is Glutamyl-tRNA(Gln) amidotransferase subunit A (485 aa).

Residues Lys79 and Ser154 each act as charge relay system in the active site. Ser178 functions as the Acyl-ester intermediate in the catalytic mechanism.

It belongs to the amidase family. GatA subfamily. Heterotrimer of A, B and C subunits.

It catalyses the reaction L-glutamyl-tRNA(Gln) + L-glutamine + ATP + H2O = L-glutaminyl-tRNA(Gln) + L-glutamate + ADP + phosphate + H(+). Functionally, allows the formation of correctly charged Gln-tRNA(Gln) through the transamidation of misacylated Glu-tRNA(Gln) in organisms which lack glutaminyl-tRNA synthetase. The reaction takes place in the presence of glutamine and ATP through an activated gamma-phospho-Glu-tRNA(Gln). This Persephonella marina (strain DSM 14350 / EX-H1) protein is Glutamyl-tRNA(Gln) amidotransferase subunit A.